The sequence spans 196 residues: Hypoxanthine/guanine phosphoribosyltransferase (196 aa).

It belongs to the purine/pyrimidine phosphoribosyltransferase family. Archaeal HPRT subfamily. Homodimer.

The protein localises to the cytoplasm. The enzyme catalyses IMP + diphosphate = hypoxanthine + 5-phospho-alpha-D-ribose 1-diphosphate. It catalyses the reaction GMP + diphosphate = guanine + 5-phospho-alpha-D-ribose 1-diphosphate. It participates in purine metabolism; IMP biosynthesis via salvage pathway; IMP from hypoxanthine: step 1/1. Its function is as follows. Catalyzes a salvage reaction resulting in the formation of IMP that is energically less costly than de novo synthesis. This is Hypoxanthine/guanine phosphoribosyltransferase from Methanocaldococcus sp. (strain FS406-22).